The sequence spans 132 residues: UPF0299 membrane protein YohJ (132 aa).

The next 4 membrane-spanning stretches (helical) occupy residues 5 to 25, 26 to 46, 63 to 83, and 93 to 113; these read LNIIWQYLRAFVLIYACLYAG, IFIASLLPVTIPGSIIGMLIL, GCYVLIRYMALLFVPIGVGVM, and FGPVVVSCAVSTLVVFLVVSW.

The protein belongs to the UPF0299 family.

It localises to the cell inner membrane. The chain is UPF0299 membrane protein YohJ from Shigella flexneri serotype 5b (strain 8401).